We begin with the raw amino-acid sequence, 521 residues long: MPRSWTDIVAEKRAIRDEKLTKCYGENVPSDPRIIAAKDIQALTKLLEARNVTAEAVVLAHIAKAKEAHQRTNCLTEICFDEALEHARELDAFQQEHGRLKGPLHGVPVSLKDQFNLKGLDSTLGYVGRAFHPAASDCVLVKVLKQLGAVILAKTNLPQCILWGETDNPLWGLTTHPMNPEYTPGGSSGGEGTLLALNGSMLGWGTDIGGSIRVPSHMNGLWGFKPSSGRFSYEAVAVSQDGQQQIPSVVGPMARTLSTITLASKAMIEAECWRLDPQLPPMPWRKDVFQEYLQKPLVIGIMVDDGTVKVHPPIERVFKEFCKKLEAAGHELVPWDTSLNADCIKIMDEHYIADGGEDIRRDMAAGGEPYMPHVQNLVDRGSAISVYEYWQLNKRKKATQAAYNTMWNATKSSSGKPVDVLLVPTMPHTAIPHRTLRYPGYTKLFNMLDYSALSFPAGTALKALDSVCTGEYEPRNAADAWNWSLYDIEKMDGYSVGLQIVGRRMEEEKVLGAAHQVQQLL.

Active-site charge relay system residues include K112 and S187. Substrate contacts are provided by residues S187 and 208–211 (IGGS). The active-site Acyl-ester intermediate is S211.

Belongs to the amidase family.

It catalyses the reaction a monocarboxylic acid amide + H2O = a monocarboxylate + NH4(+). Its pathway is xenobiotic degradation. Amidase; part of the Fusarium detoxification of benzoxazolinone cluster 1 (FDB1) involved in the degradation of benzoxazolinones produced by the host plant. Maize, wheat, and rye produce the 2 benzoxazinone phytoanticipins 2,4-dihy-droxy-7-methoxy-1,4-benzoxazin-3-one (DIMBOA) and 2,4-dihydroxy-1,4-benzoxazin-3-one (DIBOA) that, due to their inherent instability once released, spontaneously degrade to the more stable corresponding benzoxazolinones, 6-methoxy-2-benzoxazolinone (MBOA) and 2-benzoxazolinone (BOA), respectively. The first step in the detoxification of benzoxazolinones involves the hydrolysis of the cyclic ester bond of benzoxazolinones by the FDB1 cluster gamma-lactamase MBL1 to aminophenols. MBL1 is able to convert BOA into 2-aminophenol (2-AP), as well as MBOA into 5-methoxy-2-aminophenol (2-AMP). The FDB2 cluster N-malonyltransferase FDB2/NAT1 then metabolizes aminophenols via N-malonylation to non-toxic malonamic acids. FDB2/NAT1 converts 2-AP into N-(2-hydroxyphenyl) malonamic acid (HPMA) and 2-AMP into N-(2-hydroxy-4-methoxyphenyl) malonamic acid (HMPMA). The duplicated dienlactone hydrolases DLH1 and DLH2 may provide redundant function for hydrolyzing the lactone moiety in the BOA molecule. The roles of the amidases an other enzymes encoded by the 2 FDB clusters have not been identified so far. This Gibberella moniliformis (strain M3125 / FGSC 7600) (Maize ear and stalk rot fungus) protein is Amidase 1.